Consider the following 324-residue polypeptide: Glyoxylate/hydroxypyruvate reductase B (324 aa).

Catalysis depends on residues Arg237 and Glu266. His285 acts as the Proton donor in catalysis.

It belongs to the D-isomer specific 2-hydroxyacid dehydrogenase family. GhrB subfamily. Homodimer.

The protein resides in the cytoplasm. The catalysed reaction is glycolate + NADP(+) = glyoxylate + NADPH + H(+). The enzyme catalyses (R)-glycerate + NAD(+) = 3-hydroxypyruvate + NADH + H(+). It carries out the reaction (R)-glycerate + NADP(+) = 3-hydroxypyruvate + NADPH + H(+). In terms of biological role, catalyzes the NADPH-dependent reduction of glyoxylate and hydroxypyruvate into glycolate and glycerate, respectively. The protein is Glyoxylate/hydroxypyruvate reductase B of Escherichia coli (strain K12 / MC4100 / BW2952).